A 316-amino-acid polypeptide reads, in one-letter code: MGGKAQNGEDEARGKVLSSLPPSLVPYAELMRVHRPLGYYLNTSPYVVGVVFGAAVAPTKLPATILLDRLLILVLWSLFLRSAGCVWNDVIDMDLDRQIARTRLRPLPRGAVSSWNAVMLTAGIFACGGSLLSFLPRECAIEALIEIFFALLYPFGKRFTDFPQLILVNIGWAIPMSMHSLGLDPLAYKKPTFFMFLFIALVIVMIDVVYSRQDTEEDMKVGVKSMAVRFKHSIELLSYAFFYASTGALLAAGYYSGLGIPFTVLSVGGHFGGFLYFLKTTGVGKAPQVESYAKLACLIASLFWVVGLFVEYYLRV.

The next 9 membrane-spanning stretches (helical) occupy residues 47-67 (VVGV…TILL), 71-91 (LILV…NDVI), 115-135 (WNAV…LSFL), 139-159 (CAIE…GKRF), 162-182 (FPQL…HSLG), 191-211 (PTFF…VVYS), 234-254 (IELL…AAGY), 258-278 (LGIP…LYFL), and 294-314 (KLAC…EYYL).

This sequence belongs to the UbiA prenyltransferase family.

Its subcellular location is the membrane. The catalysed reaction is 3,5-dimethylorsellinate + (2E,6E)-farnesyl diphosphate = (3R)-3-farnesyl-6-hydroxy-2,3,5-trimethyl-4-oxocyclohexa-1,5-diene-1-carboxylate + diphosphate + H(+). It participates in secondary metabolite biosynthesis; terpenoid biosynthesis. Its function is as follows. DMOA farnesyltransferase; part of the gene cluster that mediates the biosynthesis of novofumigatonin, a heavily oxygenated meroterpenoid containing a unique orthoester moiety. The first step of the pathway is the synthesis of 3,5-dimethylorsellinic acid (DMOA) by the polyketide synthase nvfA via condensation of one acetyl-CoA starter unit with 3 malonyl-CoA units and 2 methylations. DMOA is then converted to farnesyl-DMOA by the farnesyltransferase nvfB. Epoxydation by FAD-dependent monooxygenase nvfK, followed by a protonation-initiated cyclization catalyzed by the terpene cyclase nvfL leads to the production of asnavolin H. The short chain dehydrogenase nvfC then as a 3-OH dehydrogenase of asnovolin H to yield chemesin D. There are two branches to synthesize asnovolin A from chemesin D. In one branch, chemesin D undergoes Baeyer-Villiger oxidation by nvfH, methylation by nvfJ, and enoyl reduction by the nvfM D enoylreductase that reduces the double bond between C-5'and C-6', to form respectively asnovolin I, asnovolin K, and asnovolin A. In the other branch, the methylation precedes the Baeyer-Villiger oxidation and the enoyl reduction to yield asnovolin A via the asnovolin J intermediate. Asnovolin A is further converted to fumigatonoid A by the Fe(II)/2-oxoglutarate-dependent dioxygenase nvfI that catalyzes an endoperoxidation reaction. The alpha/beta hydrolase nvfD then acts as an epimerase that converts fumigatonoid A to its C-5' epimer, which then undergoes spontaneous or nvfD-catalyzed lactonization. The following step utilizes the ketoreductase nvfG to produce fumigatonoid B. The dioxygenase nvfE further converts fumigatonoid B into fumigatonoid C. Finally the Fe(II)/2-oxoglutarate-dependent dioxygenase nvfF catalyzes two rounds of oxidation to transform fumigatonoid C into the end product, novofumigatonin A. The sequence is that of DMOA farnesyltransferase nvfB from Aspergillus novofumigatus (strain IBT 16806).